A 508-amino-acid chain; its full sequence is TATA box-binding protein-like 1 (508 aa).

Disordered regions lie at residues 145 to 190, 236 to 262, and 456 to 479; these read QISY…QMHH, EPIP…PMPD, and QKKR…FDDS.

The protein belongs to the TBP family.

It is found in the nucleus. Functionally, may be a general transcription factor. Plays an essential role for RNA polymerase II/ama-1 transcription in early embryos whereby it activates a subset of RNA polymerase II promoters and facilitates the reestablishment of transcription after mitosis. This is TATA box-binding protein-like 1 from Caenorhabditis elegans.